A 653-amino-acid chain; its full sequence is Glyceraldehyde-3-phosphate:ferredoxin oxidoreductase (653 aa).

6 residues coordinate tungstopterin: R70, G89, R196, A197, G199, and R206. Residues C333 and C337 each contribute to the [4Fe-4S] cluster site. 3 residues coordinate tungstopterin: D378, D383, and D544. A [4Fe-4S] cluster-binding site is contributed by C549.

The protein belongs to the AOR/FOR family. Monomer. It depends on [4Fe-4S] cluster as a cofactor. The cofactor is tungstopterin.

It catalyses the reaction D-glyceraldehyde 3-phosphate + 2 oxidized [2Fe-2S]-[ferredoxin] + H2O = (2R)-3-phosphoglycerate + 2 reduced [2Fe-2S]-[ferredoxin] + 3 H(+). With respect to regulation, sensitive to oxygen. Activity increased by 58%-93% in the presence of acetyl phosphate, 3-phosphoglycerate or 2,3-bisphosphoglycerate at 10 mM concentration. Inhibited by up to 25% in the presence of crotonaldehyde or formaldehyde at 10 mM concentration. Inhibited by up to 50% by sodium dithionate. 3.5-fold increase in activity observed by addition of potassium phosphate or sodium arsenate at 200 mM concentration. Activity enhanced by potassium chloride, sodium citrate or sodium sulfate at 200 mM concentration. Functionally, catalyzes the oxidation of glyceraldehyde-3-phosphate to 3-phosphoglycerate. Uses ferredoxin as electron acceptor. In vitro can also use benzyl viologen, but not NADP or NAD, as electron acceptor. Probably acts as a glycolytic enzyme in place of glyceraldehyde-3-phosphate dehydrogenase (GAPDH) and phosphoglycerate kinase (PGK) in an unusual Emden-Meyerhof glycolysis. This Pyrococcus furiosus (strain ATCC 43587 / DSM 3638 / JCM 8422 / Vc1) protein is Glyceraldehyde-3-phosphate:ferredoxin oxidoreductase.